The primary structure comprises 674 residues: DNA mismatch repair protein MutL (674 aa).

This sequence belongs to the DNA mismatch repair MutL/HexB family.

This protein is involved in the repair of mismatches in DNA. It is required for dam-dependent methyl-directed DNA mismatch repair. May act as a 'molecular matchmaker', a protein that promotes the formation of a stable complex between two or more DNA-binding proteins in an ATP-dependent manner without itself being part of a final effector complex. This is DNA mismatch repair protein MutL from Clostridium perfringens (strain ATCC 13124 / DSM 756 / JCM 1290 / NCIMB 6125 / NCTC 8237 / Type A).